We begin with the raw amino-acid sequence, 572 residues long: Proline--tRNA ligase (572 aa).

It belongs to the class-II aminoacyl-tRNA synthetase family. ProS type 1 subfamily. As to quaternary structure, homodimer.

It is found in the cytoplasm. The catalysed reaction is tRNA(Pro) + L-proline + ATP = L-prolyl-tRNA(Pro) + AMP + diphosphate. Functionally, catalyzes the attachment of proline to tRNA(Pro) in a two-step reaction: proline is first activated by ATP to form Pro-AMP and then transferred to the acceptor end of tRNA(Pro). As ProRS can inadvertently accommodate and process non-cognate amino acids such as alanine and cysteine, to avoid such errors it has two additional distinct editing activities against alanine. One activity is designated as 'pretransfer' editing and involves the tRNA(Pro)-independent hydrolysis of activated Ala-AMP. The other activity is designated 'posttransfer' editing and involves deacylation of mischarged Ala-tRNA(Pro). The misacylated Cys-tRNA(Pro) is not edited by ProRS. In Yersinia enterocolitica serotype O:8 / biotype 1B (strain NCTC 13174 / 8081), this protein is Proline--tRNA ligase.